The chain runs to 1077 residues: MAPRKRGGRGISFIFCCFRNNDHPEITYRLRNDSNFALQTMEPALPMPPVEELDVMFSELVDELDLTDKHREAMFALPAEKKWQIYCSKKKDQEENKGATSWPEFYIDQLNSMAARKSLLALEKEEEEERSKTIESLKTALRTKPMRFVTRFIDLDGLSCILNFLKTMDYETSESRIHTSLIGCIKALMNNSQGRAHVLAHSESINVIAQSLSTENIKTKVAVLEILGAVCLVPGGHKKVLQAMLHYQKYASERTRFQTLINDLDKSTGRYRDEVSLKTAIMSFINAVLSQGAGVESLDFRLHLRYEFLMLGIQPVIDKLREHENSTLDRHLDFFEMLRNEDELEFAKRFELVHIDTKSATQMFELTRRRLTHSEAYPHFMSILHHCLQMPYKRSGNTVQYWLLLDRIIQQIVIQNDKGQDPDSTPLENFNIKNVVRMLVNENEVKQWKEQAEKMRKEHNELQQKLEKKERECDAKTQEKEEMMQTLNKMKEKLEKETTEHKQVKQQVADLTAQLHELNRRAVCAAVPGGPSPGAPGGPFPSSGLGSLLPPPPPPLLSGGALPPPPPPLPPGGPPPPPGPPPLGGVLPPPGAPVSLTLKKKNIPQPTNALKSFNWSKLPENKLDGTVWTEIDDTKVFKILDLEDLERTFSAYQRQQEFFVNNSKQKEADAIDDTLSSKLKVKELSVIDGRRAQNCNILLSRLKLSNDEIKRAILTMDEQEDLPKDMLEQLLKFVPEKSDIDLLEEHKHELDRMAKADRFLFEMSRINHYQQRLQSLYFKKKFAERVAEVKPKVEAIRSGSEEVFRSRALKQLLEVVLAFGNYMNKGQRGNAYGFKISSLNKIADTKSSIDKNITLLHYLITIVENKYPKVLNLSEELRDIPQAAKVNMTELDKEISTLRSGLKAVETELEYQKSQPPQPGDKFVSVVSQFITLASFSFSDVEDLLAEAKELFTKAVKHFGEEAGKIQPDEFFGIFDQFLQAVAEAKQENENMRKRKEEEERRARLEAQLKEQRERERKVRKAKESSEESGEFDDLVSALRSGEVFDKDLSKLKRNRKRISNQVTDSSRERPITKLNF.

Serine 34 is subject to Phosphoserine. The GBD/FH3 domain occupies 45–420 (LPMPPVEELD…QIVIQNDKGQ (376 aa)). Positions 437–526 (RMLVNENEVK…ELNRRAVCAA (90 aa)) form a coiled coil. 2 disordered regions span residues 457–478 (KEHN…AKTQ) and 526–596 (AVPG…PVSL). In terms of domain architecture, FH1 spans 528–599 (PGGPSPGAPG…PGAPVSLTLK (72 aa)). Pro residues-rich tracts occupy residues 530 to 539 (GPSPGAPGGP) and 549 to 592 (LPPP…PPGA). The FH2 domain maps to 600 to 1008 (KKNIPQPTNA…EERRARLEAQ (409 aa)). Positions 693–702 (QNCNILLSRL) are actin-binding. The span at 1007 to 1026 (AQLKEQRERERKVRKAKESS) shows a compositional bias: basic and acidic residues. 2 disordered regions span residues 1007 to 1033 (AQLK…GEFD) and 1056 to 1077 (RKRI…KLNF). Phosphoserine is present on residues serine 1026 and serine 1029. One can recognise a DAD domain in the interval 1026-1057 (SEESGEFDDLVSALRSGEVFDKDLSKLKRNRK). Positions 1066–1077 (SSRERPITKLNF) are enriched in basic and acidic residues.

The protein belongs to the formin homology family. Interacts with CIP4, FNBP1 and FNBP1L. Interacts with the SH3 domains of Abl, BTK, endophilin, spectrin and SRC. Binds specifically to GTP-bound CDC42 and RHOA. Interacts with INTU; INTU mediates the indirect interaction between DAAM1 and NPHP4. Interacts (via coiled coil domain) with KANK1 (via coiled coil domain). In terms of tissue distribution, in early embryogenesis, expressed in embryonic and extraembryonic ectoderm. In later stages of gastrulation, expressed also in somites and ribs and posterior vertebrae of developing skeletal system. During organogenesis, expressed in CNS, PNS, stomach, liver and limb bud.

Its subcellular location is the cytoplasm. The protein localises to the cytoskeleton. It localises to the cilium basal body. Binds to disheveled (Dvl) and Rho, and mediates Wnt-induced Dvl-Rho complex formation. May play a role as a scaffolding protein to recruit Rho-GDP and Rho-GEF, thereby enhancing Rho-GTP formation. Can direct nucleation and elongation of new actin filaments. Involved in building functional cilia. Involved in the organization of the subapical actin network in multiciliated epithelial cells. Together with DAAM2, required for myocardial maturation and sarcomere assembly. During cell division, may regulate RHOA activation that signals spindle orientation and chromosomal segregation. The chain is Disheveled-associated activator of morphogenesis 1 (Daam1) from Mus musculus (Mouse).